The following is a 268-amino-acid chain: Secreted RxLR effector protein 32 (268 aa).

The N-terminal stretch at 1-21 (MRGAYYVAFALLVAASTRTAA) is a signal peptide. Positions 50–71 (RILRESPDPKDRLPVYASDEER) match the RxLR-dEER motif. The segment at 120 to 257 (PKLEIKKSKR…PTPESLGIGG (138 aa)) is disordered. Residues 148–161 (SNSKKSLVSSASAK) show a composition bias toward low complexity. Positions 212–224 (NLDKNKRPDEAKI) are enriched in basic and acidic residues.

This sequence belongs to the RxLR effector family.

The protein localises to the secreted. Its subcellular location is the host cell. Secreted effector that completely suppresses the host cell death induced by cell death-inducing proteins. In Plasmopara viticola (Downy mildew of grapevine), this protein is Secreted RxLR effector protein 32.